Here is a 282-residue protein sequence, read N- to C-terminus: Small ribosomal subunit protein uS2 (282 aa).

Residues 245–266 (AEEAVEELPLPTGEAQDEASSK) form a disordered region.

It belongs to the universal ribosomal protein uS2 family.

This Chlamydia trachomatis serovar D (strain ATCC VR-885 / DSM 19411 / UW-3/Cx) protein is Small ribosomal subunit protein uS2 (rpsB).